We begin with the raw amino-acid sequence, 968 residues long: Isoleucine--tRNA ligase (968 aa).

The 'HIGH' region signature appears at 68 to 78; sequence PYANGALHMGH. An L-isoleucyl-5'-AMP-binding site is contributed by Glu-584. The 'KMSKS' region signature appears at 625–629; the sequence is KMSKS. Lys-628 is an ATP binding site. Zn(2+)-binding residues include Cys-938, Cys-941, Cys-958, and Cys-961.

This sequence belongs to the class-I aminoacyl-tRNA synthetase family. IleS type 1 subfamily. Monomer. It depends on Zn(2+) as a cofactor.

The protein resides in the cytoplasm. The enzyme catalyses tRNA(Ile) + L-isoleucine + ATP = L-isoleucyl-tRNA(Ile) + AMP + diphosphate. Functionally, catalyzes the attachment of isoleucine to tRNA(Ile). As IleRS can inadvertently accommodate and process structurally similar amino acids such as valine, to avoid such errors it has two additional distinct tRNA(Ile)-dependent editing activities. One activity is designated as 'pretransfer' editing and involves the hydrolysis of activated Val-AMP. The other activity is designated 'posttransfer' editing and involves deacylation of mischarged Val-tRNA(Ile). In Synechococcus sp. (strain CC9311), this protein is Isoleucine--tRNA ligase.